Here is a 160-residue protein sequence, read N- to C-terminus: Cyclic pyranopterin monophosphate synthase (160 aa).

Substrate contacts are provided by residues 77-79 and 114-115; these read MCH and ME. Asp-129 is an active-site residue.

This sequence belongs to the MoaC family. Homohexamer; trimer of dimers.

It carries out the reaction (8S)-3',8-cyclo-7,8-dihydroguanosine 5'-triphosphate = cyclic pyranopterin phosphate + diphosphate. The protein operates within cofactor biosynthesis; molybdopterin biosynthesis. Its function is as follows. Catalyzes the conversion of (8S)-3',8-cyclo-7,8-dihydroguanosine 5'-triphosphate to cyclic pyranopterin monophosphate (cPMP). This chain is Cyclic pyranopterin monophosphate synthase, found in Listeria welshimeri serovar 6b (strain ATCC 35897 / DSM 20650 / CCUG 15529 / CIP 8149 / NCTC 11857 / SLCC 5334 / V8).